Reading from the N-terminus, the 87-residue chain is Homeotic protein ultrabithorax (87 aa).

Positions F22–A27 match the Antp-type hexapeptide motif.

Belongs to the Antp homeobox family. As to expression, in the embryo, expression is seen in the epidermis, somatic and visceral mesoderm, and the peripheral and central nervous system.

The protein resides in the nucleus. Its function is as follows. Sequence-specific transcription factor which is part of a developmental regulatory system that provides cells with specific positional identities on the anterior-posterior axis. Binds the consensus region 5'-TTAAT[GT][GA]-3'. This homeotic protein controls development of the cells in the posterior thoracic and first abdominal segments. It activates the synthesis of the decapentaplegic (DPP) growth factor. The sequence is that of Homeotic protein ultrabithorax (Ubx) from Drosophila hydei (Fruit fly).